A 508-amino-acid polypeptide reads, in one-letter code: Maturase K (508 aa).

Belongs to the intron maturase 2 family. MatK subfamily.

It localises to the plastid. Its subcellular location is the chloroplast. Functionally, usually encoded in the trnK tRNA gene intron. Probably assists in splicing its own and other chloroplast group II introns. The sequence is that of Maturase K from Abies bracteata (Bristle-cone fir).